The sequence spans 760 residues: Translocation protein SEC63 homolog (760 aa).

The Lumenal segment spans residues 1–14 (MAGQQFQYDDSGNT). A helical transmembrane segment spans residues 15-35 (FFYFLTSFVGLIVIPATYYLW). Residues 36–69 (PRDQNAEQIRLKNIRKVYGRCMWYRLRLLKPQPN) are Cytoplasmic-facing. A helical transmembrane segment spans residues 70–90 (IIPTVKKIVLLAGWALFLFLA). The Lumenal portion of the chain corresponds to 91 to 188 (YKVSKTDREY…LPAWIVDQKN (98 aa)). The J domain occupies 104 to 165 (NPYEVLNLDP…ESRKNWEEFG (62 aa)). The helical transmembrane segment at 189-209 (SILVLLVYGLAFMVILPVVVG) threads the bilayer. An SEC63 1 domain is found at 197–541 (GLAFMVILPV…LKKKPTPVLL (345 aa)). The Cytoplasmic portion of the chain corresponds to 210–760 (SWWYRSIRYS…EEEEEEEDDD (551 aa)). The segment at 492-617 (AEEQPAEDGQ…DDEAEWQELQ (126 aa)) is disordered. The span at 518 to 536 (KGPKKTAKSKKKKPLKKKP) shows a compositional bias: basic residues. Threonine 537 is modified (phosphothreonine). A compositionally biased stretch (basic and acidic residues) spans 582–608 (NRDSQSEKDDGSDRDSDREQDEKQNKD). The stretch at 597 to 635 (SDREQDEKQNKDDEAEWQELQQSIQRKERALLETKSKIT) forms a coiled coil. In terms of domain architecture, SEC63 2 spans 637 to 714 (PVYSLYFPEE…GLDQIKPLKL (78 aa)). Positions 720-760 (KPVPENHPQWDTAIEGDEDQEDSEGFEDSFEEEEEEEEDDD) are disordered. Residues 733–760 (IEGDEDQEDSEGFEDSFEEEEEEEEDDD) show a composition bias toward acidic residues. Phosphoserine occurs at positions 742 and 748.

The ER translocon complex consists of channel-forming core components SEC61A1, SEC61B and SEC61G and different auxiliary components such as SEC62 and SEC63. In terms of tissue distribution, widely expressed, with high levels in the liver.

It localises to the endoplasmic reticulum membrane. Functionally, mediates cotranslational and post-translational transport of certain precursor polypeptides across endoplasmic reticulum (ER). Proposed to play an auxiliary role in recognition of precursors with short and apolar signal peptides. May cooperate with SEC62 and HSPA5/BiP to facilitate targeting of small presecretory proteins into the SEC61 channel-forming translocon complex, triggering channel opening for polypeptide translocation to the ER lumen. Required for efficient PKD1/Polycystin-1 biogenesis and trafficking to the plasma membrane of the primary cilia. This chain is Translocation protein SEC63 homolog, found in Homo sapiens (Human).